Reading from the N-terminus, the 371-residue chain is Mannonate dehydratase (371 aa).

Belongs to the mannonate dehydratase family. Fe(2+) serves as cofactor. The cofactor is Mn(2+).

The enzyme catalyses D-mannonate = 2-dehydro-3-deoxy-D-gluconate + H2O. It functions in the pathway carbohydrate metabolism; pentose and glucuronate interconversion. In terms of biological role, catalyzes the dehydration of D-mannonate. In Geobacillus stearothermophilus (Bacillus stearothermophilus), this protein is Mannonate dehydratase (uxuA).